We begin with the raw amino-acid sequence, 248 residues long: Probable transcriptional regulatory protein Acid_5948 (248 aa).

Belongs to the TACO1 family.

It localises to the cytoplasm. This Solibacter usitatus (strain Ellin6076) protein is Probable transcriptional regulatory protein Acid_5948.